The primary structure comprises 378 residues: Ferredoxin--NADP reductase, embryo isozyme, chloroplastic (378 aa).

The N-terminal 62 residues, 1-62 (MASALGAQAS…SRHMNKIFSM (62 aa)), are a transit peptide targeting the chloroplast. In terms of domain architecture, FAD-binding FR-type spans 93–221 (KEPYTATIVS…TGPSGKIMLL (129 aa)). FAD is bound by residues 153 to 156 (RLYS), 174 to 176 (CVR), Y180, 195 to 197 (ICS), and T237. The NADP(+) site is built by S156 and R176. NADP(+) contacts are provided by residues T237, 269–270 (VA), 299–300 (SR), K309, 337–338 (GL), and E376.

It belongs to the ferredoxin--NADP reductase type 1 family. It depends on FAD as a cofactor.

Its subcellular location is the plastid. It localises to the chloroplast. It carries out the reaction 2 reduced [2Fe-2S]-[ferredoxin] + NADP(+) + H(+) = 2 oxidized [2Fe-2S]-[ferredoxin] + NADPH. It participates in energy metabolism; photosynthesis. Functionally, may play a key role in regulating the relative amounts of cyclic and non-cyclic electron flow to meet the demands of the plant for ATP and reducing power. Is involved in nitrate assimilation. The polypeptide is Ferredoxin--NADP reductase, embryo isozyme, chloroplastic (Oryza sativa subsp. japonica (Rice)).